The following is a 141-amino-acid chain: ATP synthase epsilon chain (141 aa).

It belongs to the ATPase epsilon chain family. F-type ATPases have 2 components, CF(1) - the catalytic core - and CF(0) - the membrane proton channel. CF(1) has five subunits: alpha(3), beta(3), gamma(1), delta(1), epsilon(1). CF(0) has three main subunits: a, b and c.

It is found in the cell inner membrane. Its function is as follows. Produces ATP from ADP in the presence of a proton gradient across the membrane. The chain is ATP synthase epsilon chain from Pseudomonas fluorescens (strain Pf0-1).